The chain runs to 102 residues: uncharacterized protein (102 aa).

Residues isoleucine 36–leucine 55 traverse the membrane as a helical segment.

The protein resides in the membrane. This is an uncharacterized protein from Homo sapiens (Human).